We begin with the raw amino-acid sequence, 315 residues long: Ribosomal RNA small subunit methyltransferase H (315 aa).

Residues 37-39 (GGH), aspartate 57, phenylalanine 83, aspartate 105, and glutamine 112 each bind S-adenosyl-L-methionine.

It belongs to the methyltransferase superfamily. RsmH family.

It is found in the cytoplasm. The enzyme catalyses cytidine(1402) in 16S rRNA + S-adenosyl-L-methionine = N(4)-methylcytidine(1402) in 16S rRNA + S-adenosyl-L-homocysteine + H(+). Functionally, specifically methylates the N4 position of cytidine in position 1402 (C1402) of 16S rRNA. The polypeptide is Ribosomal RNA small subunit methyltransferase H (Pseudomonas fluorescens (strain Pf0-1)).